Consider the following 447-residue polypeptide: Folate synthesis bifunctional protein (447 aa).

The interval 1 to 165 (MTTAQFICLS…SFGEIAHLLP (165 aa)) is HPPK. The Pterin-binding domain maps to 179 to 438 (TLLMGVVNVT…DVEANQRVLS (260 aa)). A DHPS region spans residues 181–447 (LMGVVNVTDN…SAAAWSGVHV (267 aa)). N186 is a binding site for Mg(2+). (7,8-dihydropterin-6-yl)methyl diphosphate-binding positions include T226, D266, N286, D356, K392, and 426–428 (RVH).

This sequence in the C-terminal section; belongs to the DHPS family. In the N-terminal section; belongs to the HPPK family. Requires Mg(2+) as cofactor.

The enzyme catalyses 6-hydroxymethyl-7,8-dihydropterin + ATP = (7,8-dihydropterin-6-yl)methyl diphosphate + AMP + H(+). The catalysed reaction is (7,8-dihydropterin-6-yl)methyl diphosphate + 4-aminobenzoate = 7,8-dihydropteroate + diphosphate. The protein operates within cofactor biosynthesis; tetrahydrofolate biosynthesis; 2-amino-4-hydroxy-6-hydroxymethyl-7,8-dihydropteridine diphosphate from 7,8-dihydroneopterin triphosphate: step 4/4. It participates in cofactor biosynthesis; tetrahydrofolate biosynthesis; 7,8-dihydrofolate from 2-amino-4-hydroxy-6-hydroxymethyl-7,8-dihydropteridine diphosphate and 4-aminobenzoate: step 1/2. The sequence is that of Folate synthesis bifunctional protein (folKP) from Chlamydia caviae (strain ATCC VR-813 / DSM 19441 / 03DC25 / GPIC) (Chlamydophila caviae).